The chain runs to 372 residues: Probable L-tyrosine/L-aspartate decarboxylase (372 aa).

The residue at position 215 (K215) is an N6-(pyridoxal phosphate)lysine.

This sequence belongs to the group II decarboxylase family. MfnA subfamily. The cofactor is pyridoxal 5'-phosphate.

The catalysed reaction is L-tyrosine + H(+) = tyramine + CO2. The enzyme catalyses L-aspartate + H(+) = beta-alanine + CO2. Its pathway is cofactor biosynthesis; methanofuran biosynthesis. It participates in cofactor biosynthesis; coenzyme A biosynthesis. Its function is as follows. Catalyzes the decarboxylation of L-tyrosine to produce tyramine for methanofuran biosynthesis. Can also catalyze the decarboxylation of L-aspartate to produce beta-alanine for coenzyme A (CoA) biosynthesis. This is Probable L-tyrosine/L-aspartate decarboxylase from Methanopyrus kandleri (strain AV19 / DSM 6324 / JCM 9639 / NBRC 100938).